The primary structure comprises 806 residues: Volume-regulated anion channel subunit LRRC8E (806 aa).

Over 1-22 (MIPVAEFKQFTEQQPAFKVLKP) the chain is Cytoplasmic. A helical transmembrane segment spans residues 23–43 (WWDVLAEYITYAMLMIGVFGC). The Extracellular segment spans residues 44 to 130 (TLQVTQDKII…YETALHWYAK (87 aa)). An intrachain disulfide couples Cys-54 to Cys-311. 2 N-linked (GlcNAc...) asparagine glycosylation sites follow: Asn-57 and Asn-80. The span at 72 to 81 (YDQQSPPSND) shows a compositional bias: polar residues. The interval 72-103 (YDQQSPPSNDSDLETTIPPPTATSSPPREMSG) is disordered. The helical transmembrane segment at 131–151 (YFPYLVVIHTLIFIICGNFWF) threads the bilayer. The Cytoplasmic portion of the chain corresponds to 152 to 275 (KFPGTSSKIE…MRQTVLKVCK (124 aa)). A disordered region spans residues 182 to 213 (EVSGESSQEKPSQERSIDRELSKPNFEEGSPA). A compositionally biased stretch (basic and acidic residues) spans 188 to 207 (SQEKPSQERSIDRELSKPNF). A helical membrane pass occupies residues 276-296 (FVLITIYNAVLVGKIHFIVPC). Topologically, residues 297 to 323 (SVHTEDMTGYNSFCCNHTKAHLFSKLA) are extracellular. Asn-312 carries N-linked (GlcNAc...) asparagine glycosylation. A helical transmembrane segment spans residues 324–344 (ITYLCFLGVYGLTCLYTLYWL). Residues 345 to 806 (FRRPLKEYSF…VEVRDKLKED (462 aa)) are Cytoplasmic-facing. LRR repeat units lie at residues 544 to 566 (LKSL…VADV), 569 to 589 (HLQK…NALK), 593 to 614 (LVKE…VFSL), 616 to 637 (NLQV…ISLQ), 641 to 662 (KLSV…IRKL), 664 to 685 (GLEE…LFLC), 687 to 708 (KLRH…IGVL), 710 to 731 (LLQY…LFFC), 733 to 754 (KLKT…VGSL), and 756 to 777 (CLVK…LGNC).

Belongs to the LRRC8 family. Heterohexamer; oligomerizes with other LRRC8 proteins (lrrc8a, lrrc8c, lrrc8d and/or lrrc8b) to form a heterohexamer. Detected in a channel complex that contains lrrc8a, lrrc8c and lrrc8e. In vivo, the subunit composition may depend primarily on expression levels, and heterooligomeric channels containing various proportions of the different LRRC8 proteins may coexist.

The protein localises to the cell membrane. The protein resides in the endoplasmic reticulum membrane. It is found in the lysosome membrane. It carries out the reaction chloride(in) = chloride(out). It catalyses the reaction iodide(out) = iodide(in). The catalysed reaction is taurine(out) = taurine(in). The enzyme catalyses 2',3'-cGAMP(out) = 2',3'-cGAMP(in). Functionally, non-essential component of the volume-regulated anion channel (VRAC, also named VSOAC channel), an anion channel required to maintain a constant cell volume in response to extracellular or intracellular osmotic changes. The VRAC channel conducts iodide better than chloride and can also conduct organic osmolytes like taurine. Mediates efflux of amino acids, such as aspartate, in response to osmotic stress. The VRAC channel also mediates transport of immunoreactive cyclic dinucleotide GMP-AMP (2'-3'-cGAMP), an immune messenger produced in response to DNA virus in the cytosol. Channel activity requires lrrc8a plus at least one other family member (lrrc8b, lrrc8c, lrrc8d or lrrc8e); channel characteristics depend on the precise subunit composition. Also plays a role in lysosome homeostasis by forming functional lysosomal VRAC channels in response to low cytoplasmic ionic strength condition: lysosomal VRAC channels are necessary for the formation of large lysosome-derived vacuoles, which store and then expel excess water to maintain cytosolic water homeostasis. This chain is Volume-regulated anion channel subunit LRRC8E, found in Xenopus tropicalis (Western clawed frog).